Here is a 207-residue protein sequence, read N- to C-terminus: Large ribosomal subunit protein uL4 (207 aa).

Positions 49–78 (HAVKNRSAVRGGGRKPWRQKGTGRARQGSI) are disordered. The segment covering 60–71 (GGRKPWRQKGTG) has biased composition (basic residues).

It belongs to the universal ribosomal protein uL4 family. As to quaternary structure, part of the 50S ribosomal subunit.

One of the primary rRNA binding proteins, this protein initially binds near the 5'-end of the 23S rRNA. It is important during the early stages of 50S assembly. It makes multiple contacts with different domains of the 23S rRNA in the assembled 50S subunit and ribosome. In terms of biological role, forms part of the polypeptide exit tunnel. This chain is Large ribosomal subunit protein uL4, found in Enterococcus faecalis (strain ATCC 700802 / V583).